The chain runs to 631 residues: Eukaryotic translation initiation factor 2-alpha kinase 1 (631 aa).

Residues 1–34 (MQGGNSGVRKREEEGGGEGAVAAPPAIDFPAESS) are disordered. An SIFI-degron motif is present at residues 85-104 (LRSRQVFKLLCQTFIKMGLL). A Protein kinase domain is found at 167-583 (FEEVAILGKG…AVQLLQSELF (417 aa)). ATP is bound by residues 173 to 181 (LGKGGYGRV) and K196. Residues 260–301 (QEEDREQYDVKNDESSSSSIVFAEPTPEKGKRFGESDTENQN) are disordered. Residue T285 is modified to Phosphothreonine. Over residues 285 to 301 (TPEKGKRFGESDTENQN) the composition is skewed to basic and acidic residues. Residues 410–415 (ACPYVM) form an HRM 1 repeat. Catalysis depends on D442, which acts as the Proton acceptor. T486 and T488 each carry phosphothreonine; by autocatalysis. At T493 the chain carries Phosphothreonine. The HRM 2 repeat unit spans residues 552–557 (RCPVQA).

Belongs to the protein kinase superfamily. Ser/Thr protein kinase family. GCN2 subfamily. As to quaternary structure, synthesized in an inactive form that binds to the N-terminal domain of CDC37. Has to be associated with a multiprotein complex containing Hsp90, CDC37 and PPP5C for maturation and activation by autophosphorylation. The phosphatase PPP5C modulates this activation. Homodimer; homodimerizes in presence of heme, forming a disulfide-linked inactive homodimer. Interacts with DELE1; binds both to full-length DELE1 and processed form of DELE1 (S-DELE1) in response to stress, leading to activate its protein kinase activity and trigger the integrated stress response (ISR). In terms of processing, activated by autophosphorylation; phosphorylated predominantly on serine and threonine residues, but also on tyrosine residues. Autophosphorylation at Thr-488 is required for kinase activation. The active autophosphorylated form apparently is largely refractory to cellular heme fluctuations. Post-translationally, ubiquitinated and degraded by the SIFI complex once the mitochondrial stress has been resolved, thereby providing stress response silencing. Within the SIFI complex, UBR4 initiates ubiquitin chain that are further elongated or branched by KCMF1.

Its subcellular location is the cytoplasm. It carries out the reaction L-seryl-[protein] + ATP = O-phospho-L-seryl-[protein] + ADP + H(+). The enzyme catalyses L-threonyl-[protein] + ATP = O-phospho-L-threonyl-[protein] + ADP + H(+). Its activity is regulated as follows. In normal conditions, the protein kinase activity is inhibited; inhibition is relieved by various stress conditions. Inhibited by heme: in presence of heme, forms a disulfide-linked inactive homodimer. Heme depletion relieves inhibition and stimulates kinase activity by autophosphorylation. Inhibited by the heme metabolites biliverdin and bilirubin. Induced by oxidative stress generated by arsenite treatment. Binding of nitric oxide (NO) to the heme iron in the N-terminal heme-binding domain activates the kinase activity, while binding of carbon monoxide (CO) suppresses kinase activity. Protein kinase activity is also activated upon binding to DELE1 in response to various stress, triggering the integrated stress response (ISR): activated by full-length DELE1 in response to iron deficiency, while it is activated by the processed form of DELE1 (S-DELE1) in response to mitochondrial stress. Functionally, metabolic-stress sensing protein kinase that phosphorylates the alpha subunit of eukaryotic translation initiation factor 2 (EIF2S1/eIF-2-alpha) in response to various stress conditions. Key activator of the integrated stress response (ISR) required for adaptation to various stress, such as heme deficiency, oxidative stress, osmotic shock, mitochondrial dysfunction and heat shock. EIF2S1/eIF-2-alpha phosphorylation in response to stress converts EIF2S1/eIF-2-alpha in a global protein synthesis inhibitor, leading to a global attenuation of cap-dependent translation, while concomitantly initiating the preferential translation of ISR-specific mRNAs, such as the transcriptional activator ATF4, and hence allowing ATF4-mediated reprogramming. Acts as a key sensor of heme-deficiency: in normal conditions, binds hemin via a cysteine thiolate and histidine nitrogenous coordination, leading to inhibit the protein kinase activity. This binding occurs with moderate affinity, allowing it to sense the heme concentration within the cell: heme depletion relieves inhibition and stimulates kinase activity, activating the ISR. Thanks to this unique heme-sensing capacity, plays a crucial role to shut off protein synthesis during acute heme-deficient conditions. In red blood cells (RBCs), controls hemoglobin synthesis ensuring a coordinated regulation of the synthesis of its heme and globin moieties. It thereby plays an essential protective role for RBC survival in anemias of iron deficiency. Iron deficiency also triggers activation by full-length DELE1. Also activates the ISR in response to mitochondrial dysfunction: HRI/EIF2AK1 protein kinase activity is activated upon binding to the processed form of DELE1 (S-DELE1), thereby promoting the ATF4-mediated reprogramming. Also acts as an activator of mitophagy in response to mitochondrial damage: catalyzes phosphorylation of eIF-2-alpha (EIF2S1) following activation by S-DELE1, thereby promoting mitochondrial localization of EIF2S1, triggering PRKN-independent mitophagy. The sequence is that of Eukaryotic translation initiation factor 2-alpha kinase 1 from Macaca fascicularis (Crab-eating macaque).